Here is a 479-residue protein sequence, read N- to C-terminus: Poly(A) polymerase catalytic subunit (479 aa).

Active-site residues include D202 and D204. Positions 202, 204, and 253 each coordinate Ca(2+).

It belongs to the poxviridae poly(A) polymerase catalytic subunit family. As to quaternary structure, heterodimer of a large (catalytic) subunit and a small (regulatory) subunit.

The enzyme catalyses RNA(n) + ATP = RNA(n)-3'-adenine ribonucleotide + diphosphate. In terms of biological role, polymerase that creates the 3'-poly(A) tail of mRNA's. In Cowpox virus (strain GRI-90 / Grishak) (CPV), this protein is Poly(A) polymerase catalytic subunit (OPG063).